A 221-amino-acid chain; its full sequence is Ribonuclease T (221 aa).

Residues 21 to 195 enclose the Exonuclease domain; it reads VVIDIESAGF…YDTIQTAYLF (175 aa). Residues Asp-24, Glu-26, His-182, and Asp-187 each contribute to the Mg(2+) site. The active-site Proton donor/acceptor is His-182.

The protein belongs to the RNase T family. As to quaternary structure, homodimer. The cofactor is Mg(2+).

Trims short 3' overhangs of a variety of RNA species, leaving a one or two nucleotide 3' overhang. Responsible for the end-turnover of tRNA: specifically removes the terminal AMP residue from uncharged tRNA (tRNA-C-C-A). Also appears to be involved in tRNA biosynthesis. This is Ribonuclease T from Buchnera aphidicola subsp. Cinara cedri (strain Cc).